A 117-amino-acid polypeptide reads, in one-letter code: MTRVRRGYIARRRRTKIRLFAATFRGAHSRLTRAATQQKMRALVSAHRDRGKQKRDFRRLWITRINAVTRENGVCYSYSRLMHNLYKRQLLLNRKILAQIAILNKNCLHIISNEIIK.

Belongs to the bacterial ribosomal protein bL20 family.

It localises to the plastid. It is found in the chloroplast. Its function is as follows. Binds directly to 23S ribosomal RNA and is necessary for the in vitro assembly process of the 50S ribosomal subunit. It is not involved in the protein synthesizing functions of that subunit. The chain is Large ribosomal subunit protein bL20c from Acorus calamus (Sweet flag).